The following is a 268-amino-acid chain: GTP cyclohydrolase FolE2 (268 aa).

Belongs to the GTP cyclohydrolase IV family.

It catalyses the reaction GTP + H2O = 7,8-dihydroneopterin 3'-triphosphate + formate + H(+). It functions in the pathway cofactor biosynthesis; 7,8-dihydroneopterin triphosphate biosynthesis; 7,8-dihydroneopterin triphosphate from GTP: step 1/1. Converts GTP to 7,8-dihydroneopterin triphosphate. This is GTP cyclohydrolase FolE2 from Paraburkholderia phymatum (strain DSM 17167 / CIP 108236 / LMG 21445 / STM815) (Burkholderia phymatum).